A 335-amino-acid chain; its full sequence is Glyceraldehyde-3-phosphate dehydrogenase (335 aa).

Residues 12–13, Asp34, and Arg79 each bind NAD(+); that span reads RI. D-glyceraldehyde 3-phosphate contacts are provided by residues 150–152, Thr181, 210–211, and Arg233; these read SCT and TG. The active-site Nucleophile is the Cys151. Position 315 (Asn315) interacts with NAD(+).

It belongs to the glyceraldehyde-3-phosphate dehydrogenase family. As to quaternary structure, homotetramer.

The protein localises to the cytoplasm. It catalyses the reaction D-glyceraldehyde 3-phosphate + phosphate + NAD(+) = (2R)-3-phospho-glyceroyl phosphate + NADH + H(+). The protein operates within carbohydrate degradation; glycolysis; pyruvate from D-glyceraldehyde 3-phosphate: step 1/5. The chain is Glyceraldehyde-3-phosphate dehydrogenase (GPD) from Ogataea parapolymorpha (strain ATCC 26012 / BCRC 20466 / JCM 22074 / NRRL Y-7560 / DL-1) (Yeast).